A 137-amino-acid chain; its full sequence is ATP synthase epsilon chain (137 aa).

It belongs to the ATPase epsilon chain family. F-type ATPases have 2 components, CF(1) - the catalytic core - and CF(0) - the membrane proton channel. CF(1) has five subunits: alpha(3), beta(3), gamma(1), delta(1), epsilon(1). CF(0) has three main subunits: a, b and c.

It localises to the cell membrane. In terms of biological role, produces ATP from ADP in the presence of a proton gradient across the membrane. The polypeptide is ATP synthase epsilon chain (Desulforudis audaxviator (strain MP104C)).